The sequence spans 620 residues: Chaperone protein HscA homolog (620 aa).

It belongs to the heat shock protein 70 family.

Its function is as follows. Chaperone involved in the maturation of iron-sulfur cluster-containing proteins. Has a low intrinsic ATPase activity which is markedly stimulated by HscB. The chain is Chaperone protein HscA homolog from Bordetella pertussis (strain Tohama I / ATCC BAA-589 / NCTC 13251).